The sequence spans 427 residues: MSEQESRDNAAVDAVRQKYGFGFSWLVLMIALPPLVYYLWICVTYYQGELVFTSDAAAWRRFWSHVAPPTWHAAGLYAAWFLGQAALQVWAPGPTVQGMKLPDGSRLDYRMNGIFSFLFTLAVVFGLVTMGWLDATVLYDQLGPLLTVVNIFTFVFAGFLYFWGLNGKQWERPTGRPFYDYFMGTALNPRIGSLDLKLFCEARPGMIFWLLMNLSMAAKQYELHGTVTVPMLLVVGFQSFYLIDYFIHEEAVLTTWDIKHEKFGWMLCWGDLVWLPFTYTLQAQYLVHHTHDLPVWGIIAIVALNLAGYAIFRGANIQKHHFRRDPNRIVWGKPAKYIKTKQGSLLLTSGWWGIARHMNYFGDLMIALSWCLPAAFGSPIPYFHIVYFTILLLHREKRDDAMCLAKYGEDWLQYRKKVPWRIVPKIY.

The Cytoplasmic portion of the chain corresponds to 1 to 25; it reads MSEQESRDNAAVDAVRQKYGFGFSW. A helical membrane pass occupies residues 26 to 46; it reads LVLMIALPPLVYYLWICVTYY. Topologically, residues 47–70 are periplasmic; it reads QGELVFTSDAAAWRRFWSHVAPPT. The helical transmembrane segment at 71-91 threads the bilayer; that stretch reads WHAAGLYAAWFLGQAALQVWA. At 92 to 110 the chain is on the cytoplasmic side; it reads PGPTVQGMKLPDGSRLDYR. The helical transmembrane segment at 111 to 131 threads the bilayer; sequence MNGIFSFLFTLAVVFGLVTMG. Over 132–141 the chain is Periplasmic; sequence WLDATVLYDQ. The helical transmembrane segment at 142–162 threads the bilayer; it reads LGPLLTVVNIFTFVFAGFLYF. Residues 163–197 lie on the Cytoplasmic side of the membrane; the sequence is WGLNGKQWERPTGRPFYDYFMGTALNPRIGSLDLK. Residues 198 to 218 traverse the membrane as a helical segment; that stretch reads LFCEARPGMIFWLLMNLSMAA. The Periplasmic portion of the chain corresponds to 219–226; sequence KQYELHGT. Residues 227–247 form a helical membrane-spanning segment; that stretch reads VTVPMLLVVGFQSFYLIDYFI. Topologically, residues 248 to 262 are cytoplasmic; it reads HEEAVLTTWDIKHEK. A helical transmembrane segment spans residues 263 to 283; it reads FGWMLCWGDLVWLPFTYTLQA. Over 284–291 the chain is Periplasmic; sequence QYLVHHTH. Residues 292-312 form a helical membrane-spanning segment; it reads DLPVWGIIAIVALNLAGYAIF. Residues 313–356 are Cytoplasmic-facing; that stretch reads RGANIQKHHFRRDPNRIVWGKPAKYIKTKQGSLLLTSGWWGIAR. Residues lysine 319, arginine 323, leucine 347, tryptophan 352, and 359 to 360 each bind NADP(+); that span reads NY. A helical membrane pass occupies residues 357-377; sequence HMNYFGDLMIALSWCLPAAFG. Position 378 (serine 378) is a topological domain, periplasmic. Residues 379-399 traverse the membrane as a helical segment; it reads PIPYFHIVYFTILLLHREKRD. NADP(+)-binding positions include aspartate 399, 403–407, and tyrosine 414; that span reads CLAKY. At 400-427 the chain is on the cytoplasmic side; it reads DAMCLAKYGEDWLQYRKKVPWRIVPKIY.

It belongs to the ERG4/ERG24 family.

Its subcellular location is the cell inner membrane. It carries out the reaction 4,4-dimethyl-5alpha-cholesta-8,24-dien-3beta-ol + NADP(+) = 4,4-dimethyl-5alpha-cholesta-8,14,24-trien-3beta-ol + NADPH + H(+). The protein operates within steroid biosynthesis; zymosterol biosynthesis; zymosterol from lanosterol. In terms of biological role, reduces the C14=C15 double bond of 4,4-dimethyl-cholesta-8,14,24-trienol to produce 4,4-dimethyl-cholesta-8,24-dienol. Complements the deletion of the Delta(14)-sterol reductase gene ERG24 in yeast. This Methylotuvimicrobium alcaliphilum (strain DSM 19304 / NCIMB 14124 / VKM B-2133 / 20Z) (Methylomicrobium alcaliphilum) protein is Delta(14)-sterol reductase.